Reading from the N-terminus, the 550-residue chain is Chaperonin GroEL (550 aa).

ATP is bound by residues 30–33, Lys-51, 87–91, Gly-415, 479–481, and Asp-495; these read TLGP, DGTTT, and NAA.

The protein belongs to the chaperonin (HSP60) family. As to quaternary structure, forms a cylinder of 14 subunits composed of two heptameric rings stacked back-to-back. Interacts with the co-chaperonin GroES.

It is found in the cytoplasm. The catalysed reaction is ATP + H2O + a folded polypeptide = ADP + phosphate + an unfolded polypeptide.. Its function is as follows. Together with its co-chaperonin GroES, plays an essential role in assisting protein folding. The GroEL-GroES system forms a nano-cage that allows encapsulation of the non-native substrate proteins and provides a physical environment optimized to promote and accelerate protein folding. The sequence is that of Chaperonin GroEL from Polynucleobacter asymbioticus (strain DSM 18221 / CIP 109841 / QLW-P1DMWA-1) (Polynucleobacter necessarius subsp. asymbioticus).